A 387-amino-acid polypeptide reads, in one-letter code: Natterin-4 (387 aa).

Positions Met-1–Ala-18 are cleaved as a signal peptide. Positions Glu-19–Gln-46 are excised as a propeptide. Residues Asn-31–Leu-40 are compositionally biased toward basic and acidic residues. The segment at Asn-31–Gln-57 is disordered.

It belongs to the natterin family. Post-translationally, contains 4 disulfide bonds. Expressed by the venom gland.

The protein resides in the secreted. Inhibited by tissue-kallikrein inhibitor TKI and trasylol. Plasma kallikrein inhibitor PKSI527 and classical inhibitors of serine-, metallo-, thiol- or aspartate-peptidases evokes a minor inhibition of the peptide digestion. Functionally, shows nociceptive, edema-inducing and kininogenase activity with release of kallidin from low molecular weight kininogen. The cleavage occurs at Met-Lys bonds. In Thalassophryne nattereri (Copper Joe toadfish), this protein is Natterin-4.